A 482-amino-acid chain; its full sequence is Class E basic helix-loop-helix protein 41 (482 aa).

Lysine 31 participates in a covalent cross-link: Glycyl lysine isopeptide (Lys-Gly) (interchain with G-Cter in SUMO2). The region spanning 44–99 (TYKLPHRLIEKKRRDRINECIAQLKDLLPEHLKLTTLGHLEKAVVLELTLKHLKAL) is the bHLH domain. A necessary for interaction with RXRA and repressor activity towards RXRA region spans residues 67–71 (LKDLL). Residue lysine 121 forms a Glycyl lysine isopeptide (Lys-Gly) (interchain with G-Cter in SUMO2) linkage. The region spanning 131–166 (FHSGFQTCAKEVLQYLSRFESWTPREPRCVQLINHL) is the Orange domain. Residue lysine 210 forms a Glycyl lysine isopeptide (Lys-Gly) (interchain with G-Cter in SUMO2) linkage. Disordered regions lie at residues 228 to 298 (AELA…GGAA) and 438 to 482 (VAPL…KEAP). The segment covering 246 to 256 (AEARPDREKGK) has biased composition (basic and acidic residues). Lysine 266 participates in a covalent cross-link: Glycyl lysine isopeptide (Lys-Gly) (interchain with G-Cter in SUMO2). The span at 285-297 (RGGGSGGGPGGGA) shows a compositional bias: gly residues.

Homodimer. Heterodimer with BHLHE40/DEC1. Interacts with CIART and BMAL1. Interacts with RXRA. Interacts with NR0B2 and HNF1A. As to expression, highly expressed in skeletal muscle and brain, moderately expressed in pancreas and heart, weakly expressed in placenta, lung, liver and kidney.

The protein resides in the nucleus. Transcriptional repressor involved in the regulation of the circadian rhythm by negatively regulating the activity of the clock genes and clock-controlled genes. Acts as the negative limb of a novel autoregulatory feedback loop (DEC loop) which differs from the one formed by the PER and CRY transcriptional repressors (PER/CRY loop). Both these loops are interlocked as it represses the expression of PER1 and in turn is repressed by PER1/2 and CRY1/2. Represses the activity of the circadian transcriptional activator: CLOCK-BMAL1 heterodimer by competing for the binding to E-box elements (5'-CACGTG-3') found within the promoters of its target genes. Negatively regulates its own expression and the expression of DBP and BHLHE41/DEC2. Acts as a corepressor of RXR and the RXR-LXR heterodimers and represses the ligand-induced RXRA/B/G, NR1H3/LXRA, NR1H4 and VDR transactivation activity. Inhibits HNF1A-mediated transactivation of CYP1A2, CYP2E1 AND CYP3A11. The chain is Class E basic helix-loop-helix protein 41 from Homo sapiens (Human).